Here is a 185-residue protein sequence, read N- to C-terminus: UPF0669 protein C6orf120 homolog (185 aa).

The first 23 residues, 1-23 (MATPWRCALLMILASQVVILVKC), serve as a signal peptide directing secretion. N47 carries N-linked (GlcNAc...) asparagine glycosylation.

The protein belongs to the UPF0669 family.

It is found in the secreted. May be involved in induction of apoptosis in CD4(+) T-cells, but not CD8(+) T-cells or hepatocytes. The sequence is that of UPF0669 protein C6orf120 homolog from Rattus norvegicus (Rat).